A 461-amino-acid chain; its full sequence is Inositol-trisphosphate 3-kinase A (461 aa).

The disordered stretch occupies residues 1 to 29 (MTLPGGPTGMARPGGARPCSPGLERAPRR). Residues 1 to 133 (MTLPGGPTGM…SVSSTGSSSL (133 aa)) are required for cytoskeleton location. Omega-N-methylarginine is present on residues Arg-35, Arg-55, and Arg-62. The interval 49–160 (AAAGEPRARG…GNVQLEAGED (112 aa)) is disordered. The span at 118-134 (RRLSTSSVSSTGSSSLL) shows a compositional bias: low complexity. Phosphoserine is present on residues Ser-137 and Ser-197. ATP-binding positions include Ser-197, Lys-209, 249–251 (QDL), and Asp-262. 2 residues coordinate substrate: Lys-264 and Arg-285. Residues 287-295 (DMYKKMLAV) form a calmodulin-binding region. Position 312–319 (312–319 (KPRYMQWR)) interacts with substrate. 2 residues coordinate ATP: Lys-336 and Asp-416. Lys-419 is a binding site for substrate.

It belongs to the inositol phosphokinase (IPK) family. As to expression, expressed in brain.

The protein resides in the cytoplasm. The protein localises to the cytoskeleton. The catalysed reaction is 1D-myo-inositol 1,4,5-trisphosphate + ATP = 1D-myo-inositol 1,3,4,5-tetrakisphosphate + ADP + H(+). Activated by calcium/calmodulin. Catalyzes the phosphorylation of 1D-myo-inositol 1,4,5-trisphosphate (InsP3) into 1D-myo-inositol 1,3,4,5-tetrakisphosphate and participates to the regulation of calcium homeostasis. The protein is Inositol-trisphosphate 3-kinase A of Homo sapiens (Human).